Consider the following 137-residue polypeptide: Large-conductance mechanosensitive channel (137 aa).

The next 2 helical transmembrane spans lie at Ala-9–Phe-29 and Ile-79–Ile-99.

Belongs to the MscL family. As to quaternary structure, homopentamer.

Its subcellular location is the cell inner membrane. Channel that opens in response to stretch forces in the membrane lipid bilayer. May participate in the regulation of osmotic pressure changes within the cell. This Pseudomonas aeruginosa (strain UCBPP-PA14) protein is Large-conductance mechanosensitive channel.